A 330-amino-acid chain; its full sequence is G-protein coupled receptor 157 (330 aa).

Topologically, residues 1–15 (MPSPAPPTELLPWER) are extracellular. A helical membrane pass occupies residues 16–36 (AVVLLSCALSALGSGLLVATH). At 37–48 (ALWPDLRSRARR) the chain is on the cytoplasmic side. A helical transmembrane segment spans residues 49 to 69 (LLLFLSLADLLSAASYFYGVL). Over 70-87 (QDFAGTSWDCVLQGALST) the chain is Extracellular. Residues 88–108 (FANTSSFFWTVAIALYLYLSI) traverse the membrane as a helical segment. Residues 109–119 (VRTTRGPSTDH) lie on the Cytoplasmic side of the membrane. Residues 120–140 (LIWAFHLISWGVPLAITVAAV) traverse the membrane as a helical segment. Over 141 to 166 (SLKKIGYDASDVSVGWCWINLEAEDR) the chain is Extracellular. Residues 167–187 (VLWMLLTGKLWEMLAYILLPL) traverse the membrane as a helical segment. The Cytoplasmic portion of the chain corresponds to 188-227 (LYLLVRKHINRAHQALSEYRPICEGRQLQRGSSTSTADKK). Residues 228–248 (LVLIPLIFICLRVWSTVRFVL) form a helical membrane-spanning segment. Residues 249 to 259 (TLCGSPAVQTP) lie on the Extracellular side of the membrane. A helical membrane pass occupies residues 260-280 (VLVVLHGIGNTFQGGANCIMF). The Cytoplasmic segment spans residues 281-330 (VLCTRAVRTRLFSLCCCCPRPSTQSPPGAPTPPKIGESQESRRTPEVPST). Residues 301 to 330 (PSTQSPPGAPTPPKIGESQESRRTPEVPST) are disordered. The span at 317 to 330 (ESQESRRTPEVPST) shows a compositional bias: basic and acidic residues.

The protein belongs to the G-protein coupled receptor 2 family. As to expression, expressed in the primary cilia of radial glial progenitors (RGPs) in the developing neocortex.

The protein localises to the cell projection. Its subcellular location is the cilium membrane. In terms of biological role, orphan receptor that promotes neuronal differentiation of radial glial progenitors (RGPs). The activity of this receptor is mediated by a G(q)-protein that activates a phosphatidylinositol-calcium second messenger. The protein is G-protein coupled receptor 157 (Gpr157) of Mus musculus (Mouse).